A 358-amino-acid polypeptide reads, in one-letter code: UDP-N-acetylglucosamine--N-acetylmuramyl-(pentapeptide) pyrophosphoryl-undecaprenol N-acetylglucosamine transferase (358 aa).

Residues 10–12 (TGG), N124, R165, S191, I246, and Q291 each bind UDP-N-acetyl-alpha-D-glucosamine.

Belongs to the glycosyltransferase 28 family. MurG subfamily.

The protein resides in the cell inner membrane. It carries out the reaction di-trans,octa-cis-undecaprenyl diphospho-N-acetyl-alpha-D-muramoyl-L-alanyl-D-glutamyl-meso-2,6-diaminopimeloyl-D-alanyl-D-alanine + UDP-N-acetyl-alpha-D-glucosamine = di-trans,octa-cis-undecaprenyl diphospho-[N-acetyl-alpha-D-glucosaminyl-(1-&gt;4)]-N-acetyl-alpha-D-muramoyl-L-alanyl-D-glutamyl-meso-2,6-diaminopimeloyl-D-alanyl-D-alanine + UDP + H(+). Its pathway is cell wall biogenesis; peptidoglycan biosynthesis. Its function is as follows. Cell wall formation. Catalyzes the transfer of a GlcNAc subunit on undecaprenyl-pyrophosphoryl-MurNAc-pentapeptide (lipid intermediate I) to form undecaprenyl-pyrophosphoryl-MurNAc-(pentapeptide)GlcNAc (lipid intermediate II). This Citrifermentans bemidjiense (strain ATCC BAA-1014 / DSM 16622 / JCM 12645 / Bem) (Geobacter bemidjiensis) protein is UDP-N-acetylglucosamine--N-acetylmuramyl-(pentapeptide) pyrophosphoryl-undecaprenol N-acetylglucosamine transferase.